Here is a 229-residue protein sequence, read N- to C-terminus: Probable GTP-binding protein EngB (229 aa).

An EngB-type G domain is found at 53–228 (DLPEVAFAGR…RAEIVRLCID (176 aa)). GTP-binding positions include 61-68 (GRSNVGKS), 88-92 (GRTRE), 106-109 (DLPG), 173-176 (TKAD), and 207-209 (TSS). Mg(2+) contacts are provided by Ser-68 and Thr-90.

This sequence belongs to the TRAFAC class TrmE-Era-EngA-EngB-Septin-like GTPase superfamily. EngB GTPase family. Requires Mg(2+) as cofactor.

Its function is as follows. Necessary for normal cell division and for the maintenance of normal septation. In Caulobacter vibrioides (strain NA1000 / CB15N) (Caulobacter crescentus), this protein is Probable GTP-binding protein EngB.